A 544-amino-acid chain; its full sequence is Chaperonin GroEL (544 aa).

Residues Thr-30 to Pro-33, Lys-51, Asp-87 to Thr-91, Gly-415, Asn-479 to Ala-481, and Asp-495 contribute to the ATP site.

Belongs to the chaperonin (HSP60) family. In terms of assembly, forms a cylinder of 14 subunits composed of two heptameric rings stacked back-to-back. Interacts with the co-chaperonin GroES.

It is found in the cytoplasm. It carries out the reaction ATP + H2O + a folded polypeptide = ADP + phosphate + an unfolded polypeptide.. Together with its co-chaperonin GroES, plays an essential role in assisting protein folding. The GroEL-GroES system forms a nano-cage that allows encapsulation of the non-native substrate proteins and provides a physical environment optimized to promote and accelerate protein folding. The chain is Chaperonin GroEL from Francisella tularensis subsp. tularensis (strain SCHU S4 / Schu 4).